Here is a 232-residue protein sequence, read N- to C-terminus: Phosphoribosylaminoimidazole-succinocarboxamide synthase (232 aa).

The protein belongs to the SAICAR synthetase family.

The enzyme catalyses 5-amino-1-(5-phospho-D-ribosyl)imidazole-4-carboxylate + L-aspartate + ATP = (2S)-2-[5-amino-1-(5-phospho-beta-D-ribosyl)imidazole-4-carboxamido]succinate + ADP + phosphate + 2 H(+). It functions in the pathway purine metabolism; IMP biosynthesis via de novo pathway; 5-amino-1-(5-phospho-D-ribosyl)imidazole-4-carboxamide from 5-amino-1-(5-phospho-D-ribosyl)imidazole-4-carboxylate: step 1/2. This is Phosphoribosylaminoimidazole-succinocarboxamide synthase from Finegoldia magna (strain ATCC 29328 / DSM 20472 / WAL 2508) (Peptostreptococcus magnus).